A 282-amino-acid chain; its full sequence is Phosphatidylserine decarboxylase proenzyme (282 aa).

Catalysis depends on charge relay system; for autoendoproteolytic cleavage activity residues Asp-89, His-145, and Ser-249. The active-site Schiff-base intermediate with substrate; via pyruvic acid; for decarboxylase activity is the Ser-249. Ser-249 is subject to Pyruvic acid (Ser); by autocatalysis.

It belongs to the phosphatidylserine decarboxylase family. PSD-B subfamily. Prokaryotic type I sub-subfamily. In terms of assembly, heterodimer of a large membrane-associated beta subunit and a small pyruvoyl-containing alpha subunit. It depends on pyruvate as a cofactor. Is synthesized initially as an inactive proenzyme. Formation of the active enzyme involves a self-maturation process in which the active site pyruvoyl group is generated from an internal serine residue via an autocatalytic post-translational modification. Two non-identical subunits are generated from the proenzyme in this reaction, and the pyruvate is formed at the N-terminus of the alpha chain, which is derived from the carboxyl end of the proenzyme. The autoendoproteolytic cleavage occurs by a canonical serine protease mechanism, in which the side chain hydroxyl group of the serine supplies its oxygen atom to form the C-terminus of the beta chain, while the remainder of the serine residue undergoes an oxidative deamination to produce ammonia and the pyruvoyl prosthetic group on the alpha chain. During this reaction, the Ser that is part of the protease active site of the proenzyme becomes the pyruvoyl prosthetic group, which constitutes an essential element of the active site of the mature decarboxylase.

It localises to the cell membrane. The enzyme catalyses a 1,2-diacyl-sn-glycero-3-phospho-L-serine + H(+) = a 1,2-diacyl-sn-glycero-3-phosphoethanolamine + CO2. The protein operates within phospholipid metabolism; phosphatidylethanolamine biosynthesis; phosphatidylethanolamine from CDP-diacylglycerol: step 2/2. Its function is as follows. Catalyzes the formation of phosphatidylethanolamine (PtdEtn) from phosphatidylserine (PtdSer). The chain is Phosphatidylserine decarboxylase proenzyme from Anaeromyxobacter sp. (strain K).